The following is a 228-amino-acid chain: Protein GrpE (228 aa).

Over residues 1–22 (MDDKQKTNEEVKASSFDSEKSS) the composition is skewed to basic and acidic residues. The interval 1–71 (MDDKQKTNEE…DQTNTNNNEL (71 aa)) is disordered. Over residues 38-53 (QNVQHDNGSNPAQKQN) the composition is skewed to polar residues.

The protein belongs to the GrpE family. Homodimer.

The protein localises to the cytoplasm. Functionally, participates actively in the response to hyperosmotic and heat shock by preventing the aggregation of stress-denatured proteins, in association with DnaK and GrpE. It is the nucleotide exchange factor for DnaK and may function as a thermosensor. Unfolded proteins bind initially to DnaJ; upon interaction with the DnaJ-bound protein, DnaK hydrolyzes its bound ATP, resulting in the formation of a stable complex. GrpE releases ADP from DnaK; ATP binding to DnaK triggers the release of the substrate protein, thus completing the reaction cycle. Several rounds of ATP-dependent interactions between DnaJ, DnaK and GrpE are required for fully efficient folding. The polypeptide is Protein GrpE (Coprothermobacter proteolyticus (strain ATCC 35245 / DSM 5265 / OCM 4 / BT)).